A 556-amino-acid polypeptide reads, in one-letter code: Glucomannan 4-beta-mannosyltransferase 7 (556 aa).

A helical membrane pass occupies residues 58–78 (VVVPVFKFLVLLCLVMSVMFF). Residue D158 is part of the active site. Residues D217 and D219 each contribute to the substrate site. Residue D311 is part of the active site. 4 consecutive transmembrane segments (helical) span residues 390–410 (IVAH…TVLF), 426–448 (LITL…WVLF), 502–522 (LLEL…IVYG), and 526–546 (LYVY…GFVG).

Belongs to the glycosyltransferase 2 family. Plant cellulose synthase-like A subfamily. Ubiquitous.

The protein resides in the golgi apparatus membrane. The catalysed reaction is GDP-mannose + (glucomannan)n = GDP + (glucomannan)n+1.. In terms of biological role, probable mannan synthase which consists of a 4-beta-mannosyltransferase activity on mannan using GDP-mannose. The beta-1,4-mannan product is the backbone for galactomannan synthesis by galactomannan galactosyltransferase. Galactomannan is a noncellulosic polysaccharides of plant cell wall. Required for synthesis of a cell wall polysaccharide essential for pollen tube growth, for cell wall structure, or for signaling during plant embryo development. In Arabidopsis thaliana (Mouse-ear cress), this protein is Glucomannan 4-beta-mannosyltransferase 7.